Consider the following 427-residue polypeptide: UPF0229 protein bll6755 (427 aa).

The interval 86–107 is disordered; sequence DYLQRSGQGSAKDSGPGEGDSE.

Belongs to the UPF0229 family.

This Bradyrhizobium diazoefficiens (strain JCM 10833 / BCRC 13528 / IAM 13628 / NBRC 14792 / USDA 110) protein is UPF0229 protein bll6755.